The chain runs to 250 residues: Global transcriptional regulator CodY (250 aa).

The GAF domain stretch occupies residues 1 to 147 (MSTLLEKTRK…GATVVGLEIL (147 aa)). Residues 195–214 (ASKIADKVGITRSVIVNALR) constitute a DNA-binding region (H-T-H motif).

Belongs to the CodY family.

It is found in the cytoplasm. Functionally, DNA-binding global transcriptional regulator which is involved in the adaptive response to starvation and acts by directly or indirectly controlling the expression of numerous genes in response to nutrient availability. During rapid exponential growth, CodY is highly active and represses genes whose products allow adaptation to nutrient depletion. The protein is Global transcriptional regulator CodY of Thermoanaerobacter sp. (strain X514).